We begin with the raw amino-acid sequence, 173 residues long: Inorganic pyrophosphatase (173 aa).

The substrate site is built by Lys29, Arg43, and Tyr55. Mg(2+) is bound by residues Asp65, Asp70, and Asp102. Tyr141 lines the substrate pocket.

Belongs to the PPase family. Homohexamer. Requires Mg(2+) as cofactor.

The protein resides in the cytoplasm. It catalyses the reaction diphosphate + H2O = 2 phosphate + H(+). Functionally, catalyzes the hydrolysis of inorganic pyrophosphate (PPi) forming two phosphate ions. The sequence is that of Inorganic pyrophosphatase from Rickettsia felis (strain ATCC VR-1525 / URRWXCal2) (Rickettsia azadi).